A 372-amino-acid chain; its full sequence is Adaptive-response sensory kinase SasA (372 aa).

Residues 147–360 (MVAHELRTPL…CFHFTVPVWQ (214 aa)) form the Histidine kinase domain. Histidine 150 is subject to Phosphohistidine; by autocatalysis.

In terms of assembly, homooligomerizes. Interacts with KaiC. Participates in the KaiBC complex, whose core is composed of a KaiC homohexamer and 6 KaiB.

It catalyses the reaction ATP + protein L-histidine = ADP + protein N-phospho-L-histidine.. Its function is as follows. Member of the two-component regulatory system SasA/RpaA involved in genome-wide circadian gene expression. One of several clock output pathways. Participates in the Kai clock protein complex, the main circadian regulator in cyanobacteria, via its interaction with KaiC. KaiC enhances the autophosphorylation activity of SasA, which then transfers its phosphate group to RpaA to activate it. In addition to its output function, recruits fold-shifted KaiB (KaiB(fs)) to KaiC to cooperatively form the KaiB(6):KaiC(6) complex (independent of SasA kinase activity). Required for robustness of the circadian rhythm of gene expression and is involved in clock output, also required for adaptation to light/dark cycles. The polypeptide is Adaptive-response sensory kinase SasA (Prochlorococcus marinus (strain AS9601)).